We begin with the raw amino-acid sequence, 160 residues long: Dihydrofolate reductase (160 aa).

Residues 1-160 enclose the DHFR domain; that stretch reads MVKAIWAMDQ…KVAYYHKIAR (160 aa). Substrate is bound at residue 5–7; it reads IWA. Residues 6-7 and 14-19 each bind NADP(+); these read WA and IGNGNS. 2 residues coordinate substrate: E27 and R32. 43–46 lines the NADP(+) pocket; sequence GSAT. R57 lines the substrate pocket. NADP(+) contacts are provided by residues 62 to 65 and 101 to 106; these read LTRN and CGGAQV. S120 serves as a coordination point for substrate.

This sequence belongs to the dihydrofolate reductase family.

It carries out the reaction (6S)-5,6,7,8-tetrahydrofolate + NADP(+) = 7,8-dihydrofolate + NADPH + H(+). Its pathway is cofactor biosynthesis; tetrahydrofolate biosynthesis; 5,6,7,8-tetrahydrofolate from 7,8-dihydrofolate: step 1/1. Key enzyme in folate metabolism. Catalyzes an essential reaction for de novo glycine and purine synthesis, and for DNA precursor synthesis. The protein is Dihydrofolate reductase (folA) of Mycoplasma pneumoniae (strain ATCC 29342 / M129 / Subtype 1) (Mycoplasmoides pneumoniae).